A 218-amino-acid polypeptide reads, in one-letter code: UPF0711 protein C18orf21 homolog (218 aa).

A Phosphoserine modification is found at S126. Positions 130-146 (ASAASKASPKTPKRAAA) are enriched in low complexity. The tract at residues 130 to 192 (ASAASKASPK…NGSKRKKHFS (63 aa)) is disordered. T140 bears the Phosphothreonine mark. Positions 147–156 (GSTNISQSVH) are enriched in polar residues. The span at 161-172 (RSPSSTVRTPTS) shows a compositional bias: low complexity. Polar residues predominate over residues 173-183 (GQSTPICSSRN).

This sequence belongs to the UPF0711 family.

This is UPF0711 protein C18orf21 homolog from Rattus norvegicus (Rat).